We begin with the raw amino-acid sequence, 375 residues long: o-succinylbenzoate synthase (375 aa).

K166 functions as the Proton donor in the catalytic mechanism. 3 residues coordinate Mg(2+): D191, E216, and D241. The active-site Proton acceptor is K265.

This sequence belongs to the mandelate racemase/muconate lactonizing enzyme family. MenC type 2 subfamily. In terms of assembly, homotetramer. Requires a divalent metal cation as cofactor.

It carries out the reaction (1R,6R)-6-hydroxy-2-succinyl-cyclohexa-2,4-diene-1-carboxylate = 2-succinylbenzoate + H2O. It catalyses the reaction N-acetyl-D-methionine = N-acetyl-L-methionine. The protein operates within quinol/quinone metabolism; 1,4-dihydroxy-2-naphthoate biosynthesis; 1,4-dihydroxy-2-naphthoate from chorismate: step 4/7. It functions in the pathway quinol/quinone metabolism; menaquinone biosynthesis. Its function is as follows. Converts 2-succinyl-6-hydroxy-2,4-cyclohexadiene-1-carboxylate (SHCHC) to 2-succinylbenzoate (OSB). Also acts as a N-succinylamino acid racemase (NSAR) that catalyzes the racemization of N-succinyl-D/L-phenylalanine. Can catalyze the racemization of a broad range of N-acylamino acids, including N-acetyl-D-methionine, N-formyl-D/L-methionine, N-formyl-D/L-norleucine, N-formyl-D/L-aminobutyric acid, N-formyl-D/L-norvaline, N-formyl-D/L-homophenylalanine, N-carbamoyl-D-methionine and N-carbamoyl-D-norleucine. May be a bifunctional enzyme involved in menaquinone biosynthesis and in an irreversible pathway for the conversion of D- to L-amino acids, thereby facilitating the survival and/or growth of the organism. The chain is o-succinylbenzoate synthase from Geobacillus stearothermophilus (Bacillus stearothermophilus).